The chain runs to 461 residues: Alpha-tubulin N-acetyltransferase 1 (461 aa).

An N-acetyltransferase domain is found at 2–189 (VEFRFDIKPL…NNFVLYEGFF (188 aa)). Acetyl-CoA is bound by residues 123 to 136 (FYVH…GLGK) and 159 to 168 (SEKLLSFLSK). 3 disordered regions span residues 196–295 (NGGG…GNHD), 314–362 (NSYE…PEVA), and 418–443 (RPPG…SGGG). Polar residues predominate over residues 233–254 (RRGSQQQTTPNARLQQITQISP). The span at 283–293 (GSAEANSGNGN) shows a compositional bias: low complexity. A compositionally biased stretch (acidic residues) spans 318 to 336 (PEPEVEPEPEPEPEPEPEP). Residues 339-356 (ITPPSPPPKSHTPTPPSV) are compositionally biased toward pro residues. Polar residues predominate over residues 426–439 (SPGQDNTDAMSTVS).

It belongs to the acetyltransferase ATAT1 family.

It carries out the reaction L-lysyl-[alpha-tubulin] + acetyl-CoA = N(6)-acetyl-L-lysyl-[alpha-tubulin] + CoA + H(+). Its function is as follows. Specifically acetylates 'Lys-40' in alpha-tubulin on the lumenal side of microtubules. Promotes microtubule destabilization and accelerates microtubule dynamics; this activity may be independent of acetylation activity. Acetylates alpha-tubulin with a slow enzymatic rate, due to a catalytic site that is not optimized for acetyl transfer. Enters the microtubule through each end and diffuses quickly throughout the lumen of microtubules. Acetylates only long/old microtubules because of its slow acetylation rate since it does not have time to act on dynamically unstable microtubules before the enzyme is released. Acetylates central spindle microtubules. The polypeptide is Alpha-tubulin N-acetyltransferase 1 (Drosophila melanogaster (Fruit fly)).